The chain runs to 151 residues: UPF0756 membrane protein Lreu_0946 (151 aa).

4 helical membrane-spanning segments follow: residues 4–24, 52–72, 77–97, and 115–135; these read WLFLALVLLIAIFGHNSSLII, WGVTVISVAILIPIATGQIGF, AAFKTPAGWIAVGMGIAVAIL, and LVLGTIIGVVAFKGIAAGPVI.

Belongs to the UPF0756 family.

The protein localises to the cell membrane. In Limosilactobacillus reuteri (strain DSM 20016) (Lactobacillus reuteri), this protein is UPF0756 membrane protein Lreu_0946.